The sequence spans 524 residues: MKFNELNLSADLLAEIEKAGFVEASPIQEQTIPLALEGKDVIGQAQTGTGKTAAFGLPTLEKIRTEEATIQALVIAPTRELAVQSQEELFRFGRSKGVKVRSVYGGSSIEKQIKALKSGAHIVVGTPGRLLDLIKRKALKLQDIETLILDEADEMLNMGFLEDIEAIISRVPENRQTLLFSATMPDAIKRIGVQFMKAPEHVKIAAKELTTELVDQYYIRVKEQEKFDTMTRLMDVAQPELAIVFGRTKRRVDELTRGLKIRGFRAEGIHGDLDQNKRLRVLRDFKNGNLDVLVATDVAARGLDISGVTHVYNYDIPQDPESYVHRIGRTGRAGKSGQSITFVAPNEMGYLQIIENLTKKRMKGLKPASVEESFQSKKQVALKKIERDFADETIRANFEKFGKDARKLAAEFTPEELAMYILSLTVQDPDSLPEVEIAREKPLPFKPSGNGFGGKAKGGRGGRRGDDRRERDRRGNGRRDEFKKGSRGNDRFDKEKRYRKDNKKPRNTLSEKQTGFVIRNKGDK.

Positions 1–29 (MKFNELNLSADLLAEIEKAGFVEASPIQE) match the Q motif motif. The 171-residue stretch at 32–202 (IPLALEGKDV…VQFMKAPEHV (171 aa)) folds into the Helicase ATP-binding domain. 45–52 (AQTGTGKT) provides a ligand contact to ATP. A DEAD box motif is present at residues 150 to 153 (DEAD). The region spanning 213–373 (LVDQYYIRVK…GLKPASVEES (161 aa)) is the Helicase C-terminal domain. The disordered stretch occupies residues 440 to 524 (EKPLPFKPSG…GFVIRNKGDK (85 aa)). Residues 463 to 498 (RRGDDRRERDRRGNGRRDEFKKGSRGNDRFDKEKRY) show a composition bias toward basic and acidic residues.

Belongs to the DEAD box helicase family. CshA subfamily. Oligomerizes, may be a member of the RNA degradosome.

Its subcellular location is the cytoplasm. It catalyses the reaction ATP + H2O = ADP + phosphate + H(+). DEAD-box RNA helicase possibly involved in RNA degradation. Unwinds dsRNA in both 5'- and 3'-directions, has RNA-dependent ATPase activity. This chain is DEAD-box ATP-dependent RNA helicase CshA, found in Streptococcus pneumoniae serotype 4 (strain ATCC BAA-334 / TIGR4).